The following is a 250-amino-acid chain: 3-deoxy-manno-octulosonate cytidylyltransferase (250 aa).

It belongs to the KdsB family.

It localises to the cytoplasm. The catalysed reaction is 3-deoxy-alpha-D-manno-oct-2-ulosonate + CTP = CMP-3-deoxy-beta-D-manno-octulosonate + diphosphate. Its pathway is nucleotide-sugar biosynthesis; CMP-3-deoxy-D-manno-octulosonate biosynthesis; CMP-3-deoxy-D-manno-octulosonate from 3-deoxy-D-manno-octulosonate and CTP: step 1/1. The protein operates within bacterial outer membrane biogenesis; lipopolysaccharide biosynthesis. Activates KDO (a required 8-carbon sugar) for incorporation into bacterial lipopolysaccharide in Gram-negative bacteria. The polypeptide is 3-deoxy-manno-octulosonate cytidylyltransferase (Herminiimonas arsenicoxydans).